The following is an 838-amino-acid chain: Translation initiation factor IF-2 (838 aa).

Disordered regions lie at residues 30–60 and 94–254; these read PHTAAEEHVSDSEKQSLLTHLKSSHKAKVEE and QRSP…PTGP. 2 stretches are compositionally biased toward basic and acidic residues: residues 33-43 and 96-136; these read AAEEHVSDSEK and SPEE…EARR. Residues 137–173 are compositionally biased toward low complexity; it reads QPAPVAEPVAAQAAAPAPAPVVEPVQEAPVATAAPAA. Basic and acidic residues-rich tracts occupy residues 174–214 and 222–231; these read DARK…EKAP and TTDEESDGFR. A compositionally biased stretch (basic residues) spans 232 to 245; it reads RGGRGKAKLKKRNA. The 170-residue stretch at 338–507 folds into the tr-type G domain; it reads ARAPVVTVMG…LLQAEVLELK (170 aa). The interval 347–354 is G1; it reads GHVDHGKT. 347–354 serves as a coordination point for GTP; it reads GHVDHGKT. Residues 372 to 376 are G2; sequence GITQH. A G3 region spans residues 393-396; that stretch reads DTPG. GTP is bound by residues 393–397 and 447–450; these read DTPGH and NKID. Positions 447-450 are G4; it reads NKID. The interval 483–485 is G5; it reads SAK.

It belongs to the TRAFAC class translation factor GTPase superfamily. Classic translation factor GTPase family. IF-2 subfamily.

It localises to the cytoplasm. Functionally, one of the essential components for the initiation of protein synthesis. Protects formylmethionyl-tRNA from spontaneous hydrolysis and promotes its binding to the 30S ribosomal subunits. Also involved in the hydrolysis of GTP during the formation of the 70S ribosomal complex. The protein is Translation initiation factor IF-2 of Pseudomonas fluorescens (strain ATCC BAA-477 / NRRL B-23932 / Pf-5).